Reading from the N-terminus, the 300-residue chain is Protoheme IX farnesyltransferase (300 aa).

9 helical membrane passes run 28–48 (VVAL…PTIL), 50–70 (VQPL…AAAL), 100–120 (ALIF…VFTN), 122–142 (LTAW…TAYL), 149–169 (NIVI…TAVT), 176–196 (ALLL…ALAI), 222–242 (CILL…LVGM), 243–263 (SGPL…YKAW), and 280–300 (FSIY…YLWA).

Belongs to the UbiA prenyltransferase family. Protoheme IX farnesyltransferase subfamily.

It localises to the cell inner membrane. The enzyme catalyses heme b + (2E,6E)-farnesyl diphosphate + H2O = Fe(II)-heme o + diphosphate. It participates in porphyrin-containing compound metabolism; heme O biosynthesis; heme O from protoheme: step 1/1. Functionally, converts heme B (protoheme IX) to heme O by substitution of the vinyl group on carbon 2 of heme B porphyrin ring with a hydroxyethyl farnesyl side group. The polypeptide is Protoheme IX farnesyltransferase (Shewanella oneidensis (strain ATCC 700550 / JCM 31522 / CIP 106686 / LMG 19005 / NCIMB 14063 / MR-1)).